The following is a 440-amino-acid chain: Microtubule-associated tumor suppressor 1 homolog A (440 aa).

A disordered region spans residues lysine 44–serine 67. Positions serine 69–leucine 401 form a coiled coil. Residues glycine 407–arginine 440 are disordered. Residues proline 417–phenylalanine 432 are compositionally biased toward polar residues.

This sequence belongs to the MTUS1 family. As to quaternary structure, homodimer.

The protein localises to the mitochondrion. It localises to the golgi apparatus. Its subcellular location is the cell membrane. The protein resides in the nucleus. May inhibit cell proliferation. The chain is Microtubule-associated tumor suppressor 1 homolog A (mtus1a) from Danio rerio (Zebrafish).